Here is a 172-residue protein sequence, read N- to C-terminus: Adenine phosphoribosyltransferase (172 aa).

It belongs to the purine/pyrimidine phosphoribosyltransferase family. Homodimer.

It is found in the cytoplasm. It catalyses the reaction AMP + diphosphate = 5-phospho-alpha-D-ribose 1-diphosphate + adenine. It functions in the pathway purine metabolism; AMP biosynthesis via salvage pathway; AMP from adenine: step 1/1. Functionally, catalyzes a salvage reaction resulting in the formation of AMP, that is energically less costly than de novo synthesis. This is Adenine phosphoribosyltransferase from Clostridium tetani (strain Massachusetts / E88).